The sequence spans 660 residues: Putative ATP-dependent RNA helicase Pl10 (660 aa).

The segment covering 1 to 11 (MSHVAEEDELG) has biased composition (acidic residues). A disordered region spans residues 1–117 (MSHVAEEDEL…SRGGRSGFGK (117 aa)). Serine 2 bears the N-acetylserine mark. Residues 12 to 21 (LDQQLAGLDL) show a composition bias toward low complexity. Over residues 24–34 (RDSQSGGSTAS) the composition is skewed to polar residues. A compositionally biased stretch (basic and acidic residues) spans 44-66 (RNREAAKAFYDKDGSRWSKDKDA). Residue lysine 55 is modified to N6-acetyllysine. A phosphoserine mark is found at serine 80, serine 84, and serine 89. The segment covering 93–103 (GRFDERGRSDY) has biased composition (basic and acidic residues). The residue at position 100 (arginine 100) is an Omega-N-methylarginine. A Phosphoserine modification is found at serine 101. Residue tyrosine 103 is modified to Phosphotyrosine. At arginine 109 the chain carries Omega-N-methylarginine. Lysine 117 is modified (N6-acetyllysine). Positions 179-207 (ESFSDVEMGEIIMGNIELTRYTRPTPVQK) match the Q motif motif. Position 182 is a phosphoserine (serine 182). ATP is bound at residue 199–206 (YTRPTPVQ). The Helicase ATP-binding domain maps to 210-402 (IPIIKEKRDL…RDFLDEYIFL (193 aa)). A Glycyl lysine isopeptide (Lys-Gly) (interchain with G-Cter in SUMO2) cross-link involves residue lysine 214. 223–230 (AQTGSGKT) contributes to the ATP binding site. Residues 346 to 349 (DEAD) carry the DEAD box motif. Residues 413-574 (NITQKVVWVE…EVPSWLENMA (162 aa)) enclose the Helicase C-terminal domain. Phosphoserine is present on serine 455. Omega-N-methylarginine is present on arginine 590. Residues serine 592, serine 603, and serine 610 each carry the phosphoserine modification. The interval 598–632 (RDYRQSSGASSSSFSSGRASNSRSGGGSHGSSRGF) is disordered. Positions 602–620 (QSSGASSSSFSSGRASNSR) are enriched in low complexity. 2 positions are modified to omega-N-methylarginine: arginine 615 and arginine 630. The span at 621-632 (SGGGSHGSSRGF) shows a compositional bias: gly residues.

This sequence belongs to the DEAD box helicase family. DDX3/DED1 subfamily. In terms of tissue distribution, testis.

The enzyme catalyses ATP + H2O = ADP + phosphate + H(+). Putative ATP-dependent RNA helicase. Possible role in a key step of the spermatogenic process. This is Putative ATP-dependent RNA helicase Pl10 (D1Pas1) from Mus musculus (Mouse).